Consider the following 175-residue polypeptide: Pancreatic beta cell growth factor (175 aa).

The signal sequence occupies residues 1–26 (MMLPMTLCRMSWMLLSCLMFLSWVEG). Positions 38 to 175 (ITCPQGSVAY…ELPYICKFKV (138 aa)) constitute a C-type lectin domain. Intrachain disulfides connect Cys40–Cys51, Cys68–Cys171, and Cys146–Cys163.

In terms of tissue distribution, expressed only in CW animals pancreas and to a lesser extent in duodenum. In pancreas it is found in acinar cells, but not in islets.

It is found in the secreted. In terms of biological role, constituent of ilotropin, which is a partially purified preparation of cellophane wrapping (CW) pancreata. Capable of initiating duct cell proliferation, a prerequisite for islet neogenesis. The sequence is that of Pancreatic beta cell growth factor (INGAP) from Mesocricetus auratus (Golden hamster).